The chain runs to 272 residues: Endogenous Bornavirus-like nucleoprotein 2 (272 aa).

Residues M48 to L70 form a disordered region.

In terms of biological role, may act as an RNA-binding protein. The C-terminal region is highly homologous to the bornavirus nucleocapsid N protein that binds viral RNA and oligomerizes. The viral protein also possesses a nuclear import and a nuclear export signal. These 2 signals seem absent in EBLN-2 supporting an unrelated function in Human. This chain is Endogenous Bornavirus-like nucleoprotein 2 (EBLN2), found in Homo sapiens (Human).